Consider the following 107-residue polypeptide: UPF0122 protein BLi01817/BL02321 (107 aa).

The protein belongs to the UPF0122 family.

In terms of biological role, might take part in the signal recognition particle (SRP) pathway. This is inferred from the conservation of its genetic proximity to ftsY/ffh. May be a regulatory protein. The sequence is that of UPF0122 protein BLi01817/BL02321 from Bacillus licheniformis (strain ATCC 14580 / DSM 13 / JCM 2505 / CCUG 7422 / NBRC 12200 / NCIMB 9375 / NCTC 10341 / NRRL NRS-1264 / Gibson 46).